Here is a 174-residue protein sequence, read N- to C-terminus: RNA pyrophosphohydrolase (174 aa).

Positions 6–149 (GFRANVGIII…KRDVYRKVMK (144 aa)) constitute a Nudix hydrolase domain. Residues 38-59 (GGVDDGETAEEAMYRELYEEVG) carry the Nudix box motif.

The protein belongs to the Nudix hydrolase family. RppH subfamily. Requires a divalent metal cation as cofactor.

In terms of biological role, accelerates the degradation of transcripts by removing pyrophosphate from the 5'-end of triphosphorylated RNA, leading to a more labile monophosphorylated state that can stimulate subsequent ribonuclease cleavage. The protein is RNA pyrophosphohydrolase of Shewanella baltica (strain OS223).